A 415-amino-acid polypeptide reads, in one-letter code: Serine--tRNA ligase (415 aa).

230–232 (TAE) is an L-serine binding site. 261 to 263 (RKE) is an ATP binding site. Glu-284 serves as a coordination point for L-serine. Residue 348–351 (EISS) participates in ATP binding. Residue Ser-382 coordinates L-serine.

It belongs to the class-II aminoacyl-tRNA synthetase family. Type-1 seryl-tRNA synthetase subfamily. Homodimer. The tRNA molecule binds across the dimer.

The protein resides in the cytoplasm. The catalysed reaction is tRNA(Ser) + L-serine + ATP = L-seryl-tRNA(Ser) + AMP + diphosphate + H(+). It carries out the reaction tRNA(Sec) + L-serine + ATP = L-seryl-tRNA(Sec) + AMP + diphosphate + H(+). It participates in aminoacyl-tRNA biosynthesis; selenocysteinyl-tRNA(Sec) biosynthesis; L-seryl-tRNA(Sec) from L-serine and tRNA(Sec): step 1/1. In terms of biological role, catalyzes the attachment of serine to tRNA(Ser). Is also able to aminoacylate tRNA(Sec) with serine, to form the misacylated tRNA L-seryl-tRNA(Sec), which will be further converted into selenocysteinyl-tRNA(Sec). The sequence is that of Serine--tRNA ligase from Sulfurimonas denitrificans (strain ATCC 33889 / DSM 1251) (Thiomicrospira denitrificans (strain ATCC 33889 / DSM 1251)).